We begin with the raw amino-acid sequence, 803 residues long: Translation initiation factor IF-2 (803 aa).

Residues 65 to 75 (PDKVEEKKEHT) are compositionally biased toward basic and acidic residues. Positions 65–186 (PDKVEEKKEH…PKSRKSKTLK (122 aa)) are disordered. The segment covering 175 to 185 (NKPKSRKSKTL) has biased composition (basic residues). The region spanning 300 to 468 (IRPPVVTIMG…ILLTADAALE (169 aa)) is the tr-type G domain. The G1 stretch occupies residues 309 to 316 (GHVDHGKT). A GTP-binding site is contributed by 309–316 (GHVDHGKT). The tract at residues 334-338 (GITQH) is G2. The segment at 355-358 (DTPG) is G3. GTP-binding positions include 355-359 (DTPGH) and 409-412 (NKID). The interval 409–412 (NKID) is G4. Positions 445–447 (SAK) are G5.

It belongs to the TRAFAC class translation factor GTPase superfamily. Classic translation factor GTPase family. IF-2 subfamily.

The protein localises to the cytoplasm. In terms of biological role, one of the essential components for the initiation of protein synthesis. Protects formylmethionyl-tRNA from spontaneous hydrolysis and promotes its binding to the 30S ribosomal subunits. Also involved in the hydrolysis of GTP during the formation of the 70S ribosomal complex. The protein is Translation initiation factor IF-2 of Tropheryma whipplei (strain TW08/27) (Whipple's bacillus).